A 1116-amino-acid chain; its full sequence is Cation channel sperm-associated auxiliary subunit beta (1116 aa).

Residues 1 to 1053 (MESPLIYVSV…QIYVDEAPLP (1053 aa)) are Extracellular-facing. Cysteines 35 and 60 form a disulfide. N90, N100, N118, N226, and N321 each carry an N-linked (GlcNAc...) asparagine glycan. Cysteines 189 and 302 form a disulfide. C330 and C343 are joined by a disulfide. N618 and N690 each carry an N-linked (GlcNAc...) asparagine glycan. Disulfide bonds link C718–C816, C829–C1037, C911–C920, and C922–C937. N-linked (GlcNAc...) asparagine glycans are attached at residues N913 and N921. N1010 and N1015 each carry an N-linked (GlcNAc...) asparagine glycan. A helical transmembrane segment spans residues 1054–1076 (FPGHTLIAVATAVVLGGLIFIAF). At 1077-1116 (MFQLQGIHPWRTFQRWIRRNQEKFSSISLSELIHRSKSEE) the chain is on the cytoplasmic side.

Component of the CatSper complex or CatSpermasome composed of the core pore-forming members CATSPER1, CATSPER2, CATSPER3 and CATSPER4 as well as auxiliary members CATSPERB, CATSPERG, CATSPERD, CATSPERE, CATSPERZ, C2CD6/CATSPERT, TMEM249, TMEM262 and EFCAB9. HSPA1 may be an additional auxiliary complex member. The core complex members CATSPER1, CATSPER2, CATSPER3 and CATSPER4 form a heterotetrameric channel. The auxiliary CATSPERB, CATSPERG, CATSPERD and CATSPERE subunits form a pavilion-like structure over the pore which stabilizes the complex through interactions with CATSPER4, CATSPER3, CATSPER1 and CATSPER2 respectively. TMEM262/CATSPERH interacts with CATSPERB, further stabilizing the complex. C2CD6/CATSPERT interacts at least with CATSPERD and is required for targeting the CatSper complex in the flagellar membrane.

Its subcellular location is the cell projection. It is found in the cilium. The protein resides in the flagellum membrane. Functionally, auxiliary component of the CatSper complex, a complex involved in sperm cell hyperactivation. Sperm cell hyperactivation is needed for sperm motility which is essential late in the preparation of sperm for fertilization. The protein is Cation channel sperm-associated auxiliary subunit beta of Homo sapiens (Human).